A 79-amino-acid polypeptide reads, in one-letter code: Small ribosomal subunit protein bS18 (79 aa).

This sequence belongs to the bacterial ribosomal protein bS18 family. As to quaternary structure, part of the 30S ribosomal subunit. Forms a tight heterodimer with protein bS6.

Functionally, binds as a heterodimer with protein bS6 to the central domain of the 16S rRNA, where it helps stabilize the platform of the 30S subunit. The sequence is that of Small ribosomal subunit protein bS18 from Streptococcus agalactiae serotype Ia (strain ATCC 27591 / A909 / CDC SS700).